The chain runs to 427 residues: UPF0229 protein bll6755 (427 aa).

The disordered stretch occupies residues 86–107 (DYLQRSGQGSAKDSGPGEGDSE).

This sequence belongs to the UPF0229 family.

In Bradyrhizobium diazoefficiens (strain JCM 10833 / BCRC 13528 / IAM 13628 / NBRC 14792 / USDA 110), this protein is UPF0229 protein bll6755.